A 184-amino-acid chain; its full sequence is Peptidyl-tRNA hydrolase (184 aa).

A tRNA-binding site is contributed by tyrosine 14. Histidine 19 functions as the Proton acceptor in the catalytic mechanism. 3 residues coordinate tRNA: phenylalanine 64, asparagine 66, and asparagine 112.

This sequence belongs to the PTH family. In terms of assembly, monomer.

The protein localises to the cytoplasm. It carries out the reaction an N-acyl-L-alpha-aminoacyl-tRNA + H2O = an N-acyl-L-amino acid + a tRNA + H(+). Hydrolyzes ribosome-free peptidyl-tRNAs (with 1 or more amino acids incorporated), which drop off the ribosome during protein synthesis, or as a result of ribosome stalling. In terms of biological role, catalyzes the release of premature peptidyl moieties from peptidyl-tRNA molecules trapped in stalled 50S ribosomal subunits, and thus maintains levels of free tRNAs and 50S ribosomes. This Thermoanaerobacter sp. (strain X514) protein is Peptidyl-tRNA hydrolase.